The following is a 430-amino-acid chain: Serine--tRNA ligase (430 aa).

L-serine is bound at residue 236–238; the sequence is TAE. ATP is bound at residue 267–269; the sequence is RSE. Position 290 (Glu290) interacts with L-serine. 354 to 357 provides a ligand contact to ATP; the sequence is EISS. Ser390 contacts L-serine.

This sequence belongs to the class-II aminoacyl-tRNA synthetase family. Type-1 seryl-tRNA synthetase subfamily. Homodimer. The tRNA molecule binds across the dimer.

Its subcellular location is the cytoplasm. It carries out the reaction tRNA(Ser) + L-serine + ATP = L-seryl-tRNA(Ser) + AMP + diphosphate + H(+). It catalyses the reaction tRNA(Sec) + L-serine + ATP = L-seryl-tRNA(Sec) + AMP + diphosphate + H(+). The protein operates within aminoacyl-tRNA biosynthesis; selenocysteinyl-tRNA(Sec) biosynthesis; L-seryl-tRNA(Sec) from L-serine and tRNA(Sec): step 1/1. In terms of biological role, catalyzes the attachment of serine to tRNA(Ser). Is also able to aminoacylate tRNA(Sec) with serine, to form the misacylated tRNA L-seryl-tRNA(Sec), which will be further converted into selenocysteinyl-tRNA(Sec). The sequence is that of Serine--tRNA ligase from Mannheimia succiniciproducens (strain KCTC 0769BP / MBEL55E).